The sequence spans 353 residues: Rhodopsin (353 aa).

Over 1-36 (MNGTEGPYFYIPMLNTTGIVRSPYEYPQYYLVNPAA) the chain is Extracellular. N-linked (GlcNAc...) asparagine glycans are attached at residues asparagine 2 and asparagine 15. Residues 37–61 (YAALCAYMFLLILLGFPINFLTLYV) form a helical membrane-spanning segment. Topologically, residues 62–73 (TIEHKKLRTPLN) are cytoplasmic. The chain crosses the membrane as a helical span at residues 74–96 (YILLNLAVANLFMVFGGFTTTMY). At 97-110 (TSMHGYFVLGRLGC) the chain is on the extracellular side. Cysteine 110 and cysteine 187 form a disulfide bridge. Residues 111–133 (NLEGFFATLGGEIGLWSLVVLAV) form a helical membrane-spanning segment. The 'Ionic lock' involved in activated form stabilization signature appears at 134 to 136 (ERW). At 134–152 (ERWMVVCKPISNFRFTENH) the chain is on the cytoplasmic side. A helical membrane pass occupies residues 153–173 (AIMGLGFTWFAASACAVPPLV). At 174 to 202 (GWSRYIPEGMQCSCGVDYYTRAEGFNNES) the chain is on the extracellular side. Asparagine 200 is a glycosylation site (N-linked (GlcNAc...) asparagine). The chain crosses the membrane as a helical span at residues 203–224 (FVVYMFVCHFLIPLIVVFFCYG). Over 225–252 (RLLCAVKEAAAAQQESETTQRAEREVTR) the chain is Cytoplasmic. A helical transmembrane segment spans residues 253 to 274 (MVVIMVIAFLICWCPYAGVAWY). Residues 275–286 (IFSNQGSEFGPL) are Extracellular-facing. Residues 287-308 (FMTIPAFFAKSSSIYNPLIYIF) traverse the membrane as a helical segment. The residue at position 296 (lysine 296) is an N6-(retinylidene)lysine. Over 309-353 (MNKQFRHCMITTLCCGKNPFEEEEGSTTTSKTEASSASSSSVSPA) the chain is Cytoplasmic. Residues cysteine 322 and cysteine 323 are each lipidated (S-palmitoyl cysteine). Residues 329–353 (EEEEGSTTTSKTEASSASSSSVSPA) are disordered. Residues 334–353 (STTTSKTEASSASSSSVSPA) are compositionally biased toward low complexity.

The protein belongs to the G-protein coupled receptor 1 family. Opsin subfamily. Phosphorylated on some or all of the serine and threonine residues present in the C-terminal region. Post-translationally, contains one covalently linked retinal chromophore.

It is found in the membrane. It localises to the cell projection. The protein resides in the cilium. Its subcellular location is the photoreceptor outer segment. Photoreceptor required for image-forming vision at low light intensity. While most salt water fish species use retinal as chromophore, most freshwater fish use 3-dehydroretinal, or a mixture of retinal and 3-dehydroretinal. Light-induced isomerization of 11-cis to all-trans retinal triggers a conformational change that activates signaling via G-proteins. Subsequent receptor phosphorylation mediates displacement of the bound G-protein alpha subunit by arrestin and terminates signaling. This chain is Rhodopsin (rho), found in Solea solea (Common sole).